A 426-amino-acid chain; its full sequence is Serine--tRNA ligase (426 aa).

An L-serine-binding site is contributed by 233 to 235 (TSE). 264–266 (RAE) serves as a coordination point for ATP. Glutamate 287 contacts L-serine. 351–354 (EISS) contacts ATP. L-serine is bound at residue serine 387.

Belongs to the class-II aminoacyl-tRNA synthetase family. Type-1 seryl-tRNA synthetase subfamily. Homodimer. The tRNA molecule binds across the dimer.

The protein localises to the cytoplasm. The catalysed reaction is tRNA(Ser) + L-serine + ATP = L-seryl-tRNA(Ser) + AMP + diphosphate + H(+). It carries out the reaction tRNA(Sec) + L-serine + ATP = L-seryl-tRNA(Sec) + AMP + diphosphate + H(+). It functions in the pathway aminoacyl-tRNA biosynthesis; selenocysteinyl-tRNA(Sec) biosynthesis; L-seryl-tRNA(Sec) from L-serine and tRNA(Sec): step 1/1. Functionally, catalyzes the attachment of serine to tRNA(Ser). Is also able to aminoacylate tRNA(Sec) with serine, to form the misacylated tRNA L-seryl-tRNA(Sec), which will be further converted into selenocysteinyl-tRNA(Sec). The polypeptide is Serine--tRNA ligase (Xanthomonas campestris pv. campestris (strain 8004)).